The primary structure comprises 527 residues: uncharacterized protein (527 aa).

4 disordered regions span residues 1–49 (MSSF…IKDE), 99–307 (DFNF…ATTT), 319–353 (TEINNNNSNSNNLPSIPIGNEKSKINDNQDEEDEN), and 382–419 (YINNDDGDDDDDDDENENENDSQPEEEYEENKQQQQQE). The span at 8–17 (YDDESEEEDN) shows a compositional bias: acidic residues. 2 stretches are compositionally biased toward low complexity: residues 18 to 44 (NNNNNNNNNNNNNNIINNNNNNNNSNN) and 99 to 115 (DFNFYNNNNNSNSNSNN). Over residues 141–150 (NEFRNPDLKN) the composition is skewed to basic and acidic residues. Composition is skewed to low complexity over residues 167-178 (SSQNTTTTQQSS) and 186-222 (NNNNNNNNNNNNNNNNNNNNNNNNNNNNNNNNNNSNN). Residues 229-248 (DDKSKKINENENTVNKKDNI) show a composition bias toward basic and acidic residues. The span at 283-296 (LRKKLLKNQPKTKK) shows a compositional bias: basic residues. Low complexity-rich tracts occupy residues 297–307 (STTTTTTATTT) and 319–330 (TEINNNNSNSNN). Over residues 386–410 (DDGDDDDDDDENENENDSQPEEEYE) the composition is skewed to acidic residues.

This is an uncharacterized protein from Dictyostelium discoideum (Social amoeba).